We begin with the raw amino-acid sequence, 145 residues long: Cell wall teichoic acid glycosylation protein GtcA (145 aa).

4 helical membrane-spanning segments follow: residues 21 to 41 (ILMY…TFWL), 52 to 69 (IANT…YFSN), 96 to 116 (FLTY…LSIN), and 121 to 141 (KIWT…WIIF).

Belongs to the GtrA family.

The protein localises to the cell membrane. Involved in the decoration of cell wall teichoic acid with galactose and glucose. The protein is Cell wall teichoic acid glycosylation protein GtcA (gtcA) of Listeria monocytogenes serovar 1/2a (strain ATCC BAA-679 / EGD-e).